The following is a 147-amino-acid chain: Hemoglobin subunit beta-2 (147 aa).

In terms of domain architecture, Globin spans 3 to 147; it reads HWTAEEKATI…LVAALSHGYF (145 aa). 2 residues coordinate heme b: histidine 64 and histidine 93.

The protein belongs to the globin family. As to quaternary structure, heterotetramer of two alpha chains and two beta chains. Red blood cells.

Functionally, this is a larval (tadpole) beta-globin. This chain is Hemoglobin subunit beta-2 (hbb2), found in Xenopus tropicalis (Western clawed frog).